The following is a 556-amino-acid chain: 2-succinyl-5-enolpyruvyl-6-hydroxy-3-cyclohexene-1-carboxylate synthase (556 aa).

It belongs to the TPP enzyme family. MenD subfamily. In terms of assembly, homodimer. Mg(2+) serves as cofactor. It depends on Mn(2+) as a cofactor. The cofactor is thiamine diphosphate.

The enzyme catalyses isochorismate + 2-oxoglutarate + H(+) = 5-enolpyruvoyl-6-hydroxy-2-succinyl-cyclohex-3-ene-1-carboxylate + CO2. It participates in quinol/quinone metabolism; 1,4-dihydroxy-2-naphthoate biosynthesis; 1,4-dihydroxy-2-naphthoate from chorismate: step 2/7. The protein operates within quinol/quinone metabolism; menaquinone biosynthesis. Its function is as follows. Catalyzes the thiamine diphosphate-dependent decarboxylation of 2-oxoglutarate and the subsequent addition of the resulting succinic semialdehyde-thiamine pyrophosphate anion to isochorismate to yield 2-succinyl-5-enolpyruvyl-6-hydroxy-3-cyclohexene-1-carboxylate (SEPHCHC). The polypeptide is 2-succinyl-5-enolpyruvyl-6-hydroxy-3-cyclohexene-1-carboxylate synthase (Salmonella heidelberg (strain SL476)).